A 386-amino-acid chain; its full sequence is Histidinol-phosphate aminotransferase (386 aa).

The span at 1-11 shows a compositional bias: polar residues; it reads MMVRKSTASNR. Residues 1 to 22 form a disordered region; the sequence is MMVRKSTASNRRLQDKGDEEPV. Residue lysine 248 is modified to N6-(pyridoxal phosphate)lysine.

This sequence belongs to the class-II pyridoxal-phosphate-dependent aminotransferase family. Histidinol-phosphate aminotransferase subfamily. In terms of assembly, homodimer. The cofactor is pyridoxal 5'-phosphate.

It carries out the reaction L-histidinol phosphate + 2-oxoglutarate = 3-(imidazol-4-yl)-2-oxopropyl phosphate + L-glutamate. It participates in amino-acid biosynthesis; L-histidine biosynthesis; L-histidine from 5-phospho-alpha-D-ribose 1-diphosphate: step 7/9. In Moorella thermoacetica (strain ATCC 39073 / JCM 9320), this protein is Histidinol-phosphate aminotransferase.